The primary structure comprises 141 residues: Transcription antitermination protein NusB (141 aa).

Belongs to the NusB family.

Functionally, involved in transcription antitermination. Required for transcription of ribosomal RNA (rRNA) genes. Binds specifically to the boxA antiterminator sequence of the ribosomal RNA (rrn) operons. This is Transcription antitermination protein NusB from Desulfotalea psychrophila (strain LSv54 / DSM 12343).